The primary structure comprises 356 residues: 3-isopropylmalate dehydrogenase (356 aa).

4 residues coordinate substrate: Arg-95, Arg-105, Arg-133, and Asp-223. Residues Asp-223, Asp-247, and Asp-251 each contribute to the Mg(2+) site. 281 to 293 contacts NAD(+); sequence GSAPDIAGQNKAN.

It belongs to the isocitrate and isopropylmalate dehydrogenases family. LeuB type 1 subfamily. In terms of assembly, homodimer. The cofactor is Mg(2+). Mn(2+) serves as cofactor.

The protein localises to the cytoplasm. The enzyme catalyses (2R,3S)-3-isopropylmalate + NAD(+) = 4-methyl-2-oxopentanoate + CO2 + NADH. The protein operates within amino-acid biosynthesis; L-leucine biosynthesis; L-leucine from 3-methyl-2-oxobutanoate: step 3/4. In terms of biological role, catalyzes the oxidation of 3-carboxy-2-hydroxy-4-methylpentanoate (3-isopropylmalate) to 3-carboxy-4-methyl-2-oxopentanoate. The product decarboxylates to 4-methyl-2 oxopentanoate. The polypeptide is 3-isopropylmalate dehydrogenase (Neisseria meningitidis serogroup B (strain ATCC BAA-335 / MC58)).